The chain runs to 329 residues: Microtubule-associated protein RP/EB family member 1C (329 aa).

Residues 13–115 form the Calponin-homology (CH) domain; the sequence is FVGRSEILAW…FMQWMKKYCD (103 aa). Residues 130–141 show a composition bias toward basic and acidic residues; the sequence is REASKGGKEATK. The interval 130 to 203 is disordered; that stretch reads REASKGGKEA…SAKQSKPVPA (74 aa). Low complexity predominate over residues 174–185; it reads SNNTGTHHSSTG. The EB1 C-terminal domain maps to 193-263; that stretch reads PSAKQSKPVP…LYAADGEDVG (71 aa). Positions 289 to 311 are required for nuclear localization; that stretch reads KRKLIVNLDVDVAAITTLSPRQR.

Belongs to the MAPRE family. As to quaternary structure, homodimer. As to expression, highly expressed in the root and shoot meristems, in guard cells of leaf stomata, pollen grains and pollen tubes.

The protein localises to the nucleus. The protein resides in the cytoplasm. Its subcellular location is the cytoskeleton. It localises to the spindle. It is found in the phragmoplast. Plant-specific EB1 subtype that functions preferentially at early stages of plant mitosis by regulating spindle positioning and chromosome segregation. Accumulates in the prophase nucleus and is required to maintain spindle bipolarity during premetaphase and/or metaphase and for efficient segregation of chromosomes at anaphase. May play a role in the dynamics of microtubule network in elongating pollen tubes. This chain is Microtubule-associated protein RP/EB family member 1C (EB1C), found in Arabidopsis thaliana (Mouse-ear cress).